A 453-amino-acid chain; its full sequence is MTLDVVILAAGQGTRMRSAKPKVLHALAGKPLVSHVLDTAEQLGATRTHVVIGHGAEQVETELDGRDVRFALQAEQKGTGHAVAQTLDELGDGKVLILYGDVPLIRAETLTALLDEVDERRLGLLTVTLDDPGGYGRIVRDAEGRVTRIVEHKDASEAERGITECNTGIVAATGTQLKRWLPQLSAENAQGEYYLTDIFAMAAAEGIEVATASPASALEVEGVNNRSQMAALERAYQRDRAERLLTEGVALADPARFDVRGRLQCGHDVFIDVGCVFEGDVTLGDGVSVGPYTLIRDSHVAAGTVIEAHSIIEGAEVAEQAHIGPFARLRPGTRLARQSKVGNFVETKNAEVGEGSKINHLSYVGDASLGGGVNIGAGTITCNYDGANKHRTEIGDDVFVGSNTALVAPVALGAGATIGAGSTISRDVEAGALAVARTRQTTRAGWKRPRKSS.

Positions 1-226 are pyrophosphorylase; the sequence is MTLDVVILAA…ALEVEGVNNR (226 aa). Residues 8 to 11, Lys22, Gln73, 78 to 79, 99 to 101, Gly136, Glu151, Asn166, and Asn224 each bind UDP-N-acetyl-alpha-D-glucosamine; these read LAAG, GT, and YGD. Mg(2+) is bound at residue Asp101. Asn224 contributes to the Mg(2+) binding site. Positions 227 to 247 are linker; that stretch reads SQMAALERAYQRDRAERLLTE. The interval 248 to 453 is N-acetyltransferase; sequence GVALADPARF…AGWKRPRKSS (206 aa). Residues Arg330 and Lys348 each contribute to the UDP-N-acetyl-alpha-D-glucosamine site. The active-site Proton acceptor is His360. 2 residues coordinate UDP-N-acetyl-alpha-D-glucosamine: Tyr363 and Asn374. Acetyl-CoA-binding positions include Ala377, 383-384, Ser402, Ala420, and Arg437; that span reads NY.

In the N-terminal section; belongs to the N-acetylglucosamine-1-phosphate uridyltransferase family. This sequence in the C-terminal section; belongs to the transferase hexapeptide repeat family. As to quaternary structure, homotrimer. Mg(2+) is required as a cofactor.

It is found in the cytoplasm. It carries out the reaction alpha-D-glucosamine 1-phosphate + acetyl-CoA = N-acetyl-alpha-D-glucosamine 1-phosphate + CoA + H(+). It catalyses the reaction N-acetyl-alpha-D-glucosamine 1-phosphate + UTP + H(+) = UDP-N-acetyl-alpha-D-glucosamine + diphosphate. The protein operates within nucleotide-sugar biosynthesis; UDP-N-acetyl-alpha-D-glucosamine biosynthesis; N-acetyl-alpha-D-glucosamine 1-phosphate from alpha-D-glucosamine 6-phosphate (route II): step 2/2. Its pathway is nucleotide-sugar biosynthesis; UDP-N-acetyl-alpha-D-glucosamine biosynthesis; UDP-N-acetyl-alpha-D-glucosamine from N-acetyl-alpha-D-glucosamine 1-phosphate: step 1/1. It participates in bacterial outer membrane biogenesis; LPS lipid A biosynthesis. Functionally, catalyzes the last two sequential reactions in the de novo biosynthetic pathway for UDP-N-acetylglucosamine (UDP-GlcNAc). The C-terminal domain catalyzes the transfer of acetyl group from acetyl coenzyme A to glucosamine-1-phosphate (GlcN-1-P) to produce N-acetylglucosamine-1-phosphate (GlcNAc-1-P), which is converted into UDP-GlcNAc by the transfer of uridine 5-monophosphate (from uridine 5-triphosphate), a reaction catalyzed by the N-terminal domain. This chain is Bifunctional protein GlmU, found in Chromohalobacter salexigens (strain ATCC BAA-138 / DSM 3043 / CIP 106854 / NCIMB 13768 / 1H11).